Here is a 251-residue protein sequence, read N- to C-terminus: MNKIKRLFINKKKNILNIYFTAGYPSIDSMPLILKRLQNLNIDIVEIGIPYSDPLADGNIIQKSNTKSLKNGMNISVLFYKLKKVKKYINIPIILMGYYNQFIKYGEIKFLEDCIESGVSGLILPDLPPRIYLNKYKKIFKKSKLAFIVLITPQTSLKRLKRLSSITDYFLYIVSSNSTTGTKNNINLSFLERIKEINVPKLIGFGICDKKSLNIAFKYAEGAIIGSAFIKAIKKSYLEKSIEKFIKYIIK.

Catalysis depends on proton acceptor residues Glu-46 and Asp-57.

Belongs to the TrpA family. In terms of assembly, tetramer of two alpha and two beta chains.

The catalysed reaction is (1S,2R)-1-C-(indol-3-yl)glycerol 3-phosphate + L-serine = D-glyceraldehyde 3-phosphate + L-tryptophan + H2O. It functions in the pathway amino-acid biosynthesis; L-tryptophan biosynthesis; L-tryptophan from chorismate: step 5/5. Functionally, the alpha subunit is responsible for the aldol cleavage of indoleglycerol phosphate to indole and glyceraldehyde 3-phosphate. The sequence is that of Tryptophan synthase alpha chain from Karelsulcia muelleri (strain GWSS) (Sulcia muelleri).